Here is a 61-residue protein sequence, read N- to C-terminus: Small ribosomal subunit protein uS14 (61 aa).

Zn(2+) is bound by residues cysteine 24, cysteine 27, cysteine 40, and cysteine 43.

Belongs to the universal ribosomal protein uS14 family. Zinc-binding uS14 subfamily. As to quaternary structure, part of the 30S ribosomal subunit. Contacts proteins S3 and S10. Zn(2+) is required as a cofactor.

Functionally, binds 16S rRNA, required for the assembly of 30S particles and may also be responsible for determining the conformation of the 16S rRNA at the A site. The protein is Small ribosomal subunit protein uS14 of Desulfosudis oleivorans (strain DSM 6200 / JCM 39069 / Hxd3) (Desulfococcus oleovorans).